The chain runs to 207 residues: Ribosomal RNA large subunit methyltransferase E (207 aa).

S-adenosyl-L-methionine-binding residues include glycine 51, tryptophan 53, aspartate 69, aspartate 85, and aspartate 108. Lysine 148 serves as the catalytic Proton acceptor.

The protein belongs to the class I-like SAM-binding methyltransferase superfamily. RNA methyltransferase RlmE family.

It localises to the cytoplasm. It carries out the reaction uridine(2552) in 23S rRNA + S-adenosyl-L-methionine = 2'-O-methyluridine(2552) in 23S rRNA + S-adenosyl-L-homocysteine + H(+). Its function is as follows. Specifically methylates the uridine in position 2552 of 23S rRNA at the 2'-O position of the ribose in the fully assembled 50S ribosomal subunit. This chain is Ribosomal RNA large subunit methyltransferase E, found in Methanospirillum hungatei JF-1 (strain ATCC 27890 / DSM 864 / NBRC 100397 / JF-1).